The chain runs to 371 residues: Interstrand DNA cross-link repair glycosylase (371 aa).

Positions 37–39 (QAQ) match the QXQ; important for activity motif.

It belongs to the DNA glycosylase AlkZ-like family.

Its function is as follows. DNA glycosylase involved in the repair of interstrand DNA cross-links (ICLs), which are highly toxic DNA lesions that covalently tether the opposing strands of DNA, thereby inhibiting essential cellular processes such as DNA replication and transcription. Acts by unhooking both sides of the ICLs, forming abasic (AP) sites on both strands. AlkZ specifically repairs DNA damage induced by azinomycin B (AZB), a natural product with potent antibiotic and antitumor activities that interacts covalently with duplex DNA and forms ICLs. AlkZ thus confers self-resistance to azinomycin B, which is produced by S.sahachiroi. It may also protect target sites by protein-DNA interaction. Binds sequence non-specifically to native DNA and structure-specifically to azinomycin B-modified sites, with higher affinity to azinomycin B-modified sites and lower affinity to native DNA duplex. In vitro, also acts on monoadducts and can catalyze the excision of N7-methylguanine (7mGua) from an oligonucleotide containing N7-methyldeoxyguanosine (d7mG). Is a monofunctional DNA glycosylase that does not have lyase activity. In Streptomyces sahachiroi, this protein is Interstrand DNA cross-link repair glycosylase.